The following is a 233-amino-acid chain: Purine nucleoside phosphorylase DeoD-type (233 aa).

Position 4 (His4) interacts with a purine D-ribonucleoside. Phosphate-binding positions include Gly20, Arg24, Arg43, and 87-90; that span reads RIGT. Residues 179–181 and 203–204 each bind a purine D-ribonucleoside; these read EME and SD. Catalysis depends on Asp204, which acts as the Proton donor.

Belongs to the PNP/UDP phosphorylase family. Homohexamer; trimer of homodimers.

The enzyme catalyses a purine D-ribonucleoside + phosphate = a purine nucleobase + alpha-D-ribose 1-phosphate. It catalyses the reaction a purine 2'-deoxy-D-ribonucleoside + phosphate = a purine nucleobase + 2-deoxy-alpha-D-ribose 1-phosphate. Catalyzes the reversible phosphorolytic breakdown of the N-glycosidic bond in the beta-(deoxy)ribonucleoside molecules, with the formation of the corresponding free purine bases and pentose-1-phosphate. This Helicobacter pylori (strain ATCC 700392 / 26695) (Campylobacter pylori) protein is Purine nucleoside phosphorylase DeoD-type.